The chain runs to 474 residues: Coronin-1C (474 aa).

WD repeat units lie at residues 78 to 118 (GHTG…LTLS), 128 to 168 (GHSK…ALIN), 172 to 202 (MHSDMIYNVSWSRNGSLICTASKDKKVRVID), 215 to 249 (AHEGARPMRAIFLADGNVFTTGFSRMSERQLALWN), and 263 to 303 (DTSN…PYVH). A coiled-coil region spans residues 435–474 (VQNEAKLDEILKEIKSIKETICSQDERISKLEQQLAKMAA). At Lys446 the chain carries N6-acetyllysine.

It belongs to the WD repeat coronin family. As to quaternary structure, homotrimer. Binds F-actin. Interacts with RCC2. Interacts preferentially with nucleotide-free and GDP-bound RAC1. Interacts with VIM (via head domain). Interacts with MICAL2; this interaction recruits MICAL2 to the actin filaments. As to expression, detected in skeletal muscle (at protein level). Detected in fibroblasts (at protein level). Ubiquitous.

It localises to the cell membrane. The protein resides in the cell projection. It is found in the lamellipodium. The protein localises to the ruffle membrane. Its subcellular location is the cytoplasm. It localises to the cytoskeleton. The protein resides in the cell cortex. It is found in the endosome membrane. In terms of biological role, plays a role in directed cell migration by regulating the activation and subcellular location of RAC1. Increases the presence of activated RAC1 at the leading edge of migrating cells. Required for normal organization of the cytoskeleton, including the actin cytoskeleton, microtubules and the vimentin intermediate filaments. Required for normal cell proliferation, cell migration, and normal formation of lamellipodia. Plays a role in endoplasmic reticulum-associated endosome fission: localizes to endosome membrane tubules and promotes recruitment of TMCC1, leading to recruitment of the endoplasmic reticulum to endosome tubules for fission. Endosome membrane fission of early and late endosomes is essential to separate regions destined for lysosomal degradation from carriers to be recycled to the plasma membrane. Required for normal distribution of mitochondria within cells. In Mus musculus (Mouse), this protein is Coronin-1C (Coro1c).